A 129-amino-acid polypeptide reads, in one-letter code: MKAVLLALALVYGSQGTEYGGGKMTEADYGEMVRREKCIMFVKRFCPYSIRARELLHDRGVGCKIIEVDNNLDAYSFAKRNHSTFPVFFLDGDLVEGGCEKLLVLSDSNLPPFDKSPLLTQNREPVLLD.

The region spanning 26 to 126 (EADYGEMVRR…PLLTQNREPV (101 aa)) is the Glutaredoxin domain.

This sequence belongs to the glutaredoxin family.

The protein localises to the cytoplasm. Its function is as follows. Has a glutathione-disulfide oxidoreductase activity in the presence of NADPH and glutathione reductase. Reduces low molecular weight disulfides and proteins. The chain is Glutaredoxin-like protein ECU08_1380 from Encephalitozoon cuniculi (strain GB-M1) (Microsporidian parasite).